The sequence spans 211 residues: Endoplasmic reticulum vesicle protein 25 (211 aa).

The signal sequence occupies residues 1–19 (MKSIVSVLTLLLLINAVAA). Residues 20–180 (LRFVLPAKDK…TNESTNRRVK (161 aa)) lie on the Lumenal side of the membrane. Residues 33 to 121 (PFCVRDFVKN…TKEIDLSVAI (89 aa)) enclose the GOLD domain. A helical transmembrane segment spans residues 181–201 (FFSVGITLALIALGVWQIIYL). The Cytoplasmic segment spans residues 202–211 (RSYFRSKHII).

It belongs to the EMP24/GP25L family.

The protein resides in the endoplasmic reticulum membrane. It localises to the golgi apparatus membrane. Constituent of COPII-coated endoplasmic reticulum-derived transport vesicles. Required for efficient transport of a subset of secretory proteins to the Golgi. Facilitates retrograde transport from the Golgi to the endoplasmic reticulum. This Yarrowia lipolytica (strain CLIB 122 / E 150) (Yeast) protein is Endoplasmic reticulum vesicle protein 25 (ERV25).